The sequence spans 159 residues: Mesogenin-1 (159 aa).

The disordered stretch occupies residues 79–101; it reads PGQARLPKGTKVRMSAQRRRKAS. Over residues 86-100 the composition is skewed to basic residues; it reads KGTKVRMSAQRRRKA. The region spanning 95 to 149 is the bHLH domain; sequence QRRRKASEREKLRMRTLADALHTLRNYLPPAYSQRGQPLTKIQTLKCTIKYISEL.

It is found in the nucleus. Its function is as follows. Involved in specifying the paraxial, but not dorsal, mesoderm. May regulate the expression of T-box transcription factors required for mesoderm formation and differentiation. In Gallus gallus (Chicken), this protein is Mesogenin-1 (MSGN1).